Consider the following 508-residue polypeptide: Glycerol kinase (508 aa).

Residue threonine 15 coordinates ADP. The ATP site is built by threonine 15, serine 16, and serine 17. Residue threonine 15 coordinates sn-glycerol 3-phosphate. Arginine 19 is a binding site for ADP. Residues arginine 85, glutamate 86, tyrosine 138, and aspartate 251 each contribute to the sn-glycerol 3-phosphate site. Glycerol contacts are provided by arginine 85, glutamate 86, tyrosine 138, aspartate 251, and glutamine 252. ADP-binding residues include threonine 273, glycine 317, and glycine 419. Threonine 273, glycine 317, and glycine 419 together coordinate ATP.

The protein belongs to the FGGY kinase family.

The catalysed reaction is glycerol + ATP = sn-glycerol 3-phosphate + ADP + H(+). The protein operates within polyol metabolism; glycerol degradation via glycerol kinase pathway; sn-glycerol 3-phosphate from glycerol: step 1/1. Inhibited by fructose 1,6-bisphosphate (FBP). In terms of biological role, key enzyme in the regulation of glycerol uptake and metabolism. Catalyzes the phosphorylation of glycerol to yield sn-glycerol 3-phosphate. This chain is Glycerol kinase, found in Mycoplasma genitalium (strain ATCC 33530 / DSM 19775 / NCTC 10195 / G37) (Mycoplasmoides genitalium).